Here is a 204-residue protein sequence, read N- to C-terminus: 34 kDa membrane antigen (204 aa).

A signal peptide spans 1-19 (MKRVSLLGSAAIFALVFSA). C20 carries the N-palmitoyl cysteine lipid modification. A lipid anchor (S-diacylglycerol cysteine) is attached at C20.

It belongs to the UPF0423 family.

Its subcellular location is the cell membrane. In terms of biological role, this antigen is a pathogen-specific membrane immunogen. This is 34 kDa membrane antigen (tpd) from Treponema pallidum (strain Nichols).